The chain runs to 440 residues: Xaa-Pro dipeptidase (440 aa).

Mn(2+) is bound by residues Asp244, Asp255, His335, Glu380, and Glu419.

Belongs to the peptidase M24B family. Bacterial-type prolidase subfamily. The cofactor is Mn(2+).

The catalysed reaction is Xaa-L-Pro dipeptide + H2O = an L-alpha-amino acid + L-proline. In terms of biological role, splits dipeptides with a prolyl residue in the C-terminal position. The chain is Xaa-Pro dipeptidase from Shewanella baltica (strain OS195).